The primary structure comprises 75 residues: CLAVATA3/ESR (CLE)-related protein 33 (75 aa).

Positions 1 to 22 (MASWRMLCFVLLFTSILICHDA) are cleaved as a signal peptide. A hydroxyproline mark is found at Pro67 and Pro70. Pro70 carries O-linked (Ara...) hydroxyproline glycosylation.

It belongs to the CLV3/ESR signal peptide family. Post-translationally, the O-glycosylation (arabinosylation) of the hydroxyproline Pro-70 enhances binding affinity of the CLE33p peptide for its receptor. As to expression, expressed in root vasculature.

Its subcellular location is the secreted. The protein localises to the extracellular space. Functionally, signaling peptide involved in the regulation of root colonization by arbuscular mycorrhizal (AM) fungi. Moves from root to shoot to function with the receptor kinase SUNN, in a signaling pathway that repress strigolactone biosynthetic genes and strigolactone content in the roots, and consequently reduces the promotion of further colonization by AM fungi. This is CLAVATA3/ESR (CLE)-related protein 33 from Medicago truncatula (Barrel medic).